A 167-amino-acid polypeptide reads, in one-letter code: Transmembrane protein 229B (167 aa).

At M1–Y14 the chain is on the cytoplasmic side. Residues L15–V35 traverse the membrane as a helical segment. Residues N36–K40 lie on the Extracellular side of the membrane. Residues F41–E61 form a helical membrane-spanning segment. The Cytoplasmic portion of the chain corresponds to R62–L73. The helical transmembrane segment at L74–I94 threads the bilayer. The Extracellular portion of the chain corresponds to L95–D111. A helical membrane pass occupies residues F112–E132. Topologically, residues Q133–D167 are cytoplasmic.

The protein belongs to the TMEM229 family.

The protein resides in the membrane. This Bos taurus (Bovine) protein is Transmembrane protein 229B (TMEM229B).